A 257-amino-acid chain; its full sequence is MNCDTAQPWMMSSYHPSTTSDVFWTTTPSSTSTTPSSDNGIQQYSSISTSSGYAPANSPAKTAEVNQLGGVFVNGRPLPFEMRCKIVELSRQGTRPCDISRQLKISHGCVSKILTRFSENGTIMPGTIGGSRPRVTTPKVVEYIRSLKRSDPGIFAWEIRDRLISADICDRANLPSVSSISRILRNKNGGNSSSSSSSQLRYIRDQLAEQQQQQHLQQHQYMEYNNNELNQISGNLDYQVSSSNTPPSYDSYHFIAN.

The segment covering 26 to 37 (TTPSSTSTTPSS) has biased composition (low complexity). The tract at residues 26-58 (TTPSSTSTTPSSDNGIQQYSSISTSSGYAPANS) is disordered. A compositionally biased stretch (polar residues) spans 38–52 (DNGIQQYSSISTSSG). The segment at residues 61–187 (KTAEVNQLGG…SSISRILRNK (127 aa)) is a DNA-binding region (paired). The tract at residues 64 to 120 (EVNQLGGVFVNGRPLPFEMRCKIVELSRQGTRPCDISRQLKISHGCVSKILTRFSEN) is PAI subdomain. Positions 139–187 (KVVEYIRSLKRSDPGIFAWEIRDRLISADICDRANLPSVSSISRILRNK) are RED subdomain.

It localises to the nucleus. Its function is as follows. Transcription factor. May play a role in pharyngeal cell differentiation. May have a protective role in response to infection by the Gram-negative bacterium Vibrio cholerae. This chain is Paired box protein 1 homolog, found in Caenorhabditis elegans.